The chain runs to 128 residues: Probable soluble cytochrome b562 2 (128 aa).

A signal peptide spans 1-22; the sequence is MGKTLMALITAALLSTSSLVMA. Residues Met-29 and His-124 each contribute to the heme b site.

The protein belongs to the cytochrome b562 family. Heme b is required as a cofactor.

It localises to the periplasm. Its function is as follows. Electron-transport protein of unknown function. This is Probable soluble cytochrome b562 2 (cybC2) from Yersinia pestis.